A 421-amino-acid chain; its full sequence is MFTRNMTIADYDPVLWQAIQDENRRQEEHIELIASENYASPRVMEAQGSQFTNKYAEGYPGKRYYGGCEYADIVEQLAIDRAKELFGADYVNVQPHSGSQANAAVYGALINAGDTILGMDLAHGGHLTHGAKVSFSGKIYNSVLYGITADGLIDYEDVRQKALECKPKLIVAGFSAYSQVVDWAKMREIADEVGAYLFVDMAHVAGLIAAGLYPNPLPHAHVVTTTTHKTLGGPRGGLILSSCGDEEIYKKLQSSVFPANQGGPLVHIIAAKAVCFKEALEPQYKEYQANVIKNAKAMVEVFKQRGYDVVSNGTENHLFLVSFIKQGLTGKAADAALGKANITVNKNAVPNDPQKPFVTSGIRVGTPSVTRRGSNENDVRELAGWMCDVLDALGKENEEQVIAETKEKVLAICKRLPVYPK.

Residues Leu-121 and 125-127 (GHL) each bind (6S)-5,6,7,8-tetrahydrofolate. An N6-(pyridoxal phosphate)lysine modification is found at Lys-229.

The protein belongs to the SHMT family. As to quaternary structure, homodimer. The cofactor is pyridoxal 5'-phosphate.

It is found in the cytoplasm. The catalysed reaction is (6R)-5,10-methylene-5,6,7,8-tetrahydrofolate + glycine + H2O = (6S)-5,6,7,8-tetrahydrofolate + L-serine. It participates in one-carbon metabolism; tetrahydrofolate interconversion. It functions in the pathway amino-acid biosynthesis; glycine biosynthesis; glycine from L-serine: step 1/1. In terms of biological role, catalyzes the reversible interconversion of serine and glycine with tetrahydrofolate (THF) serving as the one-carbon carrier. This reaction serves as the major source of one-carbon groups required for the biosynthesis of purines, thymidylate, methionine, and other important biomolecules. Also exhibits THF-independent aldolase activity toward beta-hydroxyamino acids, producing glycine and aldehydes, via a retro-aldol mechanism. In Haemophilus influenzae (strain PittEE), this protein is Serine hydroxymethyltransferase.